The following is a 68-amino-acid chain: Guanine nucleotide-binding protein G(I)/G(S)/G(O) subunit gamma-5B (68 aa).

The G protein gamma domain occupies 3–68; it reads GFSSVAATKK…FRPQKVCSFL (66 aa). Cys65 is modified (cysteine methyl ester). Cys65 carries the S-geranylgeranyl cysteine lipid modification. A propeptide spans 66 to 68 (removed in mature form); it reads SFL.

It belongs to the G protein gamma family. In terms of assembly, g proteins are composed of 3 units; alpha, beta and gamma.

The protein resides in the cell membrane. Its function is as follows. Guanine nucleotide-binding proteins (G proteins) are involved as a modulator or transducer in various transmembrane signaling systems. The beta and gamma chains are required for the GTPase activity, for replacement of GDP by GTP, and for G protein-effector interaction. In Homo sapiens (Human), this protein is Guanine nucleotide-binding protein G(I)/G(S)/G(O) subunit gamma-5B.